The chain runs to 718 residues: K(+)-insensitive pyrophosphate-energized proton pump (718 aa).

The next 6 membrane-spanning stretches (helical) occupy residues Ala-6 to Ile-26, Ile-61 to Ala-81, Gly-83 to Val-103, Ala-112 to Gly-132, Leu-133 to Trp-153, and Val-168 to Phe-188. Residue Lys-190 participates in substrate binding. Residues Asp-193, Asp-197, Asn-220, and Asp-223 each coordinate Mg(2+). Helical transmembrane passes span Leu-235–His-255, Leu-265–Val-285, Gly-300–Val-320, Gly-335–Ile-355, Gly-385–Ile-405, and Leu-413–Leu-433. Residue Asp-441 coordinates Mg(2+). 4 helical membrane passes run Ala-472–Ala-492, Tyr-524–Met-544, Ile-593–Ile-613, and Ala-620–Ile-640. Residues Asp-650, Asp-682, and Asp-686 each coordinate Ca(2+). Lys-689 contacts substrate. The chain crosses the membrane as a helical span at residues Ala-695–Ala-715.

The protein belongs to the H(+)-translocating pyrophosphatase (TC 3.A.10) family. K(+)-insensitive subfamily. In terms of assembly, homodimer. Mg(2+) is required as a cofactor.

Its subcellular location is the cell inner membrane. It catalyses the reaction diphosphate + H2O + H(+)(in) = 2 phosphate + 2 H(+)(out). Its function is as follows. Proton pump that utilizes the energy of pyrophosphate hydrolysis as the driving force for proton movement across the membrane. Generates a proton motive force. This is K(+)-insensitive pyrophosphate-energized proton pump from Brucella melitensis biotype 1 (strain ATCC 23456 / CCUG 17765 / NCTC 10094 / 16M).